The following is a 438-amino-acid chain: Enolase 1 (438 aa).

The substrate site is built by histidine 160 and glutamate 169. The active-site Proton donor is the glutamate 212. Mg(2+) contacts are provided by aspartate 247, glutamate 296, and aspartate 321. Substrate is bound by residues glutamate 296 and aspartate 321. The active-site Proton acceptor is the lysine 346. Residues 373–376 (SHRS) and lysine 397 contribute to the substrate site.

It belongs to the enolase family. Homodimer. The cofactor is Mg(2+).

The protein resides in the cytoplasm. The enzyme catalyses (2R)-2-phosphoglycerate = phosphoenolpyruvate + H2O. It functions in the pathway carbohydrate degradation; glycolysis; pyruvate from D-glyceraldehyde 3-phosphate: step 4/5. In Candida glabrata (strain ATCC 2001 / BCRC 20586 / JCM 3761 / NBRC 0622 / NRRL Y-65 / CBS 138) (Yeast), this protein is Enolase 1 (ENO1).